The sequence spans 294 residues: HTH-type transcriptional regulator ClcR (294 aa).

The 58-residue stretch at 1–58 (MEFRQLRYFIAVAEEGNIGAAARRLHISQPPITRQIQALEQDLGVVLFERTHRGVELT) folds into the HTH lysR-type domain. A DNA-binding region (H-T-H motif) is located at residues 18 to 37 (IGAAARRLHISQPPITRQIQ).

This sequence belongs to the LysR transcriptional regulatory family.

It is found in the cytoplasm. Its function is as follows. Involved in regulation of chlorinated catechol metabolism. Transcriptional activator of the clcABD chlorocatechol oxidative operon. The protein is HTH-type transcriptional regulator ClcR (clcR) of Pseudomonas putida (Arthrobacter siderocapsulatus).